Reading from the N-terminus, the 495-residue chain is MAALGITVALLVWMATLLFISIWKHIYSSWKLPPGPFPLPIIGNLLQLDIKNIPKSFTRLAERYGPVFTLYLGSQRAVVVHGYKPVKEVLLDYKNEFSGRGENPGFQMHKNNGIIFNNGSTWRDTRRFSLTTLRDLGMGKQGNEQRIQREAHFLLEVLRKTQGQPFDPTFVVGFAPYNVISDILFHKRFDYKDQTSLRLMSLFNENFYLLSSPWIQLYNNFPDYLQYLPGSHRKLLKNVSEVKSYALERVKDHQKSLEPSCPRGFLDTMLIEMAKERHSVDPMYTLENIAVTVADLLFAGTETTSTTLRYGLLILMKYPEVEEKLHEEIDRVIGPSRIPAVKDRLDMPYLDAVVHEIQRFIDLLPSNLLHEATQDTVFRGYVIPKGTVVIPTLDSVLHDRQEFPEPEKFKPEHFLNENGKFKYSDHFKAFSAGKRVCVGEGLARMELFLLLAAILQHFNLKSLVDPKDIDLSPIAIGFGKIPPRYKLCLIPRSKV.

298–303 (FAGTET) lines the substrate pocket. Cysteine 437 contacts heme.

Belongs to the cytochrome P450 family. As to quaternary structure, interacts with chaperones HSP70 and HSP90; this interaction is required for initial targeting to mitochondria. The cofactor is heme.

The protein localises to the endoplasmic reticulum membrane. The protein resides in the microsome membrane. Its subcellular location is the mitochondrion inner membrane. The enzyme catalyses an organic molecule + reduced [NADPH--hemoprotein reductase] + O2 = an alcohol + oxidized [NADPH--hemoprotein reductase] + H2O + H(+). The catalysed reaction is (5Z,8Z,11Z)-eicosatrienoate + reduced [NADPH--hemoprotein reductase] + O2 = 19-hydroxy-(5Z,8Z,11Z)-eicosatrienoate + oxidized [NADPH--hemoprotein reductase] + H2O + H(+). It catalyses the reaction (5Z,8Z,11Z,14Z,17Z)-eicosapentaenoate + reduced [NADPH--hemoprotein reductase] + O2 = 19-hydroxy-(5Z,8Z,11Z,14Z,17Z)-eicosapentaenoate + oxidized [NADPH--hemoprotein reductase] + H2O + H(+). It carries out the reaction (4Z,7Z,10Z,13Z,16Z,19Z)-docosahexaenoate + reduced [NADPH--hemoprotein reductase] + O2 = 21-hydroxy-(4Z,7Z,10Z,13Z,16Z,19Z)-docosahexaenoate + oxidized [NADPH--hemoprotein reductase] + H2O + H(+). The enzyme catalyses dodecanoate + reduced [NADPH--hemoprotein reductase] + O2 = 11-hydroxydodecanoate + oxidized [NADPH--hemoprotein reductase] + H2O + H(+). The catalysed reaction is tetradecanoate + reduced [NADPH--hemoprotein reductase] + O2 = 13-hydroxytetradecanoate + oxidized [NADPH--hemoprotein reductase] + H2O + H(+). It catalyses the reaction 4-nitrophenol + NADPH + O2 + H(+) = 4-nitrocatechol + NADP(+) + H2O. It functions in the pathway lipid metabolism; fatty acid metabolism. The omega-1 hydroxylase activity is stimulated by cytochrome b5. Functionally, a cytochrome P450 monooxygenase involved in the metabolism of fatty acids. Mechanistically, uses molecular oxygen inserting one oxygen atom into a substrate, and reducing the second into a water molecule, with two electrons provided by NADPH via cytochrome P450 reductase (NADPH--hemoprotein reductase). Catalyzes the hydroxylation of carbon-hydrogen bonds. Hydroxylates fatty acids specifically at the omega-1 position displaying the highest catalytic activity for saturated fatty acids. May be involved in the oxidative metabolism of xenobiotics. This is Cytochrome P450 2E1 (CYP2E1) from Bos taurus (Bovine).